The following is a 112-amino-acid chain: Protein FAM32A (112 aa).

A disordered region spans residues T23–R58. A compositionally biased stretch (basic and acidic residues) spans K45–R58.

It belongs to the FAM32 family.

The protein resides in the nucleus. May induce G2 arrest and apoptosis. May also increase cell sensitivity to apoptotic stimuli. The chain is Protein FAM32A (FAM32A) from Bos taurus (Bovine).